We begin with the raw amino-acid sequence, 328 residues long: DNA-directed RNA polymerase subunit alpha (328 aa).

The tract at residues 1 to 234 (MQTAVNEFLT…QQLAVFVDLE (234 aa)) is alpha N-terminal domain (alpha-NTD). The segment at 248-328 (IDPILLRPVD…NWPPASLKND (81 aa)) is alpha C-terminal domain (alpha-CTD).

The protein belongs to the RNA polymerase alpha chain family. In terms of assembly, homodimer. The RNAP catalytic core consists of 2 alpha, 1 beta, 1 beta' and 1 omega subunit. When a sigma factor is associated with the core the holoenzyme is formed, which can initiate transcription.

The catalysed reaction is RNA(n) + a ribonucleoside 5'-triphosphate = RNA(n+1) + diphosphate. Functionally, DNA-dependent RNA polymerase catalyzes the transcription of DNA into RNA using the four ribonucleoside triphosphates as substrates. In Cellvibrio japonicus (strain Ueda107) (Pseudomonas fluorescens subsp. cellulosa), this protein is DNA-directed RNA polymerase subunit alpha.